Consider the following 193-residue polypeptide: Mediator of RNA polymerase II transcription subunit 11 (193 aa).

Residues Ala31–Ser68 are a coiled coil. The tract at residues Ile115–Asn193 is disordered. Acidic residues predominate over residues Glu121–Glu143. Over residues Thr150–Arg175 the composition is skewed to low complexity. The segment covering Glu184–Asn193 has biased composition (acidic residues).

It belongs to the Mediator complex subunit 11 family. As to quaternary structure, component of the Mediator complex.

It is found in the nucleus. Its function is as follows. Component of the Mediator complex, a coactivator involved in the regulated transcription of nearly all RNA polymerase II-dependent genes. Mediator functions as a bridge to convey information from gene-specific regulatory proteins to the basal RNA polymerase II transcription machinery. Mediator is recruited to promoters by direct interactions with regulatory proteins and serves as a scaffold for the assembly of a functional pre-initiation complex with RNA polymerase II and the general transcription factors. This is Mediator of RNA polymerase II transcription subunit 11 (mdt-11) from Caenorhabditis briggsae.